A 468-amino-acid chain; its full sequence is UDP-N-acetylmuramate--L-alanine ligase (468 aa).

114-120 (GTHGKTT) lines the ATP pocket.

Belongs to the MurCDEF family.

The protein resides in the cytoplasm. The enzyme catalyses UDP-N-acetyl-alpha-D-muramate + L-alanine + ATP = UDP-N-acetyl-alpha-D-muramoyl-L-alanine + ADP + phosphate + H(+). It functions in the pathway cell wall biogenesis; peptidoglycan biosynthesis. Cell wall formation. The sequence is that of UDP-N-acetylmuramate--L-alanine ligase from Methylorubrum extorquens (strain PA1) (Methylobacterium extorquens).